We begin with the raw amino-acid sequence, 141 residues long: Probable mitochondrial pyruvate carrier 1 (141 aa).

The next 2 membrane-spanning stretches (helical) occupy residues 31–52 and 60–82; these read YLCS…AAIL and LISG…YAWM.

It belongs to the mitochondrial pyruvate carrier (MPC) (TC 2.A.105) family. The functional 150 kDa pyruvate import complex is a heteromer of mpc1 and mpc2.

Its subcellular location is the mitochondrion. The protein resides in the mitochondrion inner membrane. Its function is as follows. Mediates the uptake of pyruvate into mitochondria. This is Probable mitochondrial pyruvate carrier 1 from Schizosaccharomyces pombe (strain 972 / ATCC 24843) (Fission yeast).